The sequence spans 131 residues: Glycine cleavage system H protein (131 aa).

A Lipoyl-binding domain is found at 24–106 (TLRVGITDYA…YGEGWLVDLQ (83 aa)). Lysine 65 is subject to N6-lipoyllysine.

This sequence belongs to the GcvH family. In terms of assembly, the glycine cleavage system is composed of four proteins: P, T, L and H. (R)-lipoate serves as cofactor.

In terms of biological role, the glycine cleavage system catalyzes the degradation of glycine. The H protein shuttles the methylamine group of glycine from the P protein to the T protein. The polypeptide is Glycine cleavage system H protein (Mycobacterium sp. (strain JLS)).